We begin with the raw amino-acid sequence, 422 residues long: Choline monooxygenase, chloroplastic (422 aa).

Residues Met-1 to Arg-47 constitute a chloroplast transit peptide. In terms of domain architecture, Rieske spans Trp-96–Leu-203. [2Fe-2S] cluster is bound by residues Cys-138, His-140, Cys-157, and His-160. Positions 269 and 274 each coordinate Fe cation.

The protein belongs to the choline monooxygenase family. Requires [2Fe-2S] cluster as cofactor. Fe cation serves as cofactor. It depends on Mg(2+) as a cofactor.

Its subcellular location is the plastid. It is found in the chloroplast stroma. It catalyses the reaction choline + 2 reduced [2Fe-2S]-[ferredoxin] + O2 + 2 H(+) = betaine aldehyde hydrate + 2 oxidized [2Fe-2S]-[ferredoxin] + H2O. The protein operates within amine and polyamine biosynthesis; betaine biosynthesis via choline pathway; betaine aldehyde from choline (monooxygenase route): step 1/1. Functionally, catalyzes the first step of the osmoprotectant glycine betaine synthesis. This is Choline monooxygenase, chloroplastic from Arabidopsis thaliana (Mouse-ear cress).